A 96-amino-acid polypeptide reads, in one-letter code: Protein Vpr (96 aa).

The segment at 1–42 is homooligomerization; it reads MEQAPEDQGPQREPYNEWALELLEELKNEAVRHFPRLWLHGL. Ser79 and Ser96 each carry phosphoserine; by host.

Belongs to the HIV-1 VPR protein family. As to quaternary structure, homooligomer, may form homodimer. Interacts with p6-gag region of the Pr55 Gag precursor protein through a (Leu-X-X)4 motif near the C-terminus of the P6gag protein. Interacts with host UNG. May interact with host RAD23A/HHR23A. Interacts with host VPRBP/DCAF1, leading to hijack the CUL4A-RBX1-DDB1-DCAF1/VPRBP complex, mediating ubiquitination of host proteins such as TERT and ZGPAT and arrest of the cell cycle in G2 phase. In terms of processing, phosphorylated on several residues by host. These phosphorylations regulate VPR activity for the nuclear import of the HIV-1 pre-integration complex.

It localises to the virion. It is found in the host nucleus. The protein localises to the host extracellular space. Functionally, during virus replication, may deplete host UNG protein, and incude G2-M cell cycle arrest. Acts by targeting specific host proteins for degradation by the 26S proteasome, through association with the cellular CUL4A-DDB1 E3 ligase complex by direct interaction with host VPRPB/DCAF-1. Cell cycle arrest reportedly occurs within hours of infection and is not blocked by antiviral agents, suggesting that it is initiated by the VPR carried into the virion. Additionally, VPR induces apoptosis in a cell cycle dependent manner suggesting that these two effects are mechanistically linked. Detected in the serum and cerebrospinal fluid of AIDS patient, VPR may also induce cell death to bystander cells. Its function is as follows. During virus entry, plays a role in the transport of the viral pre-integration (PIC) complex to the host nucleus. This function is crucial for viral infection of non-dividing macrophages. May act directly at the nuclear pore complex, by binding nucleoporins phenylalanine-glycine (FG)-repeat regions. This chain is Protein Vpr, found in Human immunodeficiency virus type 1 group M subtype G (isolate SE6165) (HIV-1).